Consider the following 355-residue polypeptide: 45 kDa calcium-binding protein (355 aa).

The signal sequence occupies residues 1–29 (MASRQAPLCGLAPCCLWLLGVVLLMNASA). Asn33 carries an N-linked (GlcNAc...) asparagine glycan. EF-hand domains lie at 91–126 (KSRR…KTAE) and 130–165 (EAVA…TKGH). At Ser92 the chain carries Phosphoserine. Ca(2+) is bound by residues Asp104, Asn106, Asp108, Arg110, Glu115, Asp143, Asp145, Asp147, His149, and Glu154. 2 positions are modified to phosphothreonine: Thr186 and Thr210. EF-hand domains are found at residues 226 to 261 (MLQF…TVEN), 271 to 306 (WVRD…MNEF), and 307 to 342 (SALN…FTGS). 5 residues coordinate Ca(2+): Asp239, Asp241, Asp243, Lys245, and Glu250. The residue at position 258 (Thr258) is a Phosphothreonine. The Ca(2+) site is built by Asp284, Asn286, and Asp288. At Thr292 the chain carries Phosphothreonine. 6 residues coordinate Ca(2+): Glu295, Asp320, Asn322, Asn324, Tyr326, and Glu331. The tract at residues 302 to 355 (PMNEFSALNEAKQMIAIADENQNHYLEPEEVLKYSEFFTGSKLVDYARSVHEEF) is necessary for intracellular retention in Golgi apparatus lumen.

This sequence belongs to the CREC family.

Its subcellular location is the golgi apparatus lumen. May regulate calcium-dependent activities in the endoplasmic reticulum lumen or post-ER compartment. This Bos taurus (Bovine) protein is 45 kDa calcium-binding protein (SDF4).